An 807-amino-acid chain; its full sequence is MRLSPVLLRLSRGPALLALALPLAVALAFSDETLDKVPKSEGYCSRILRVQGTRREGYTEFSLRVEGDPDFYKPGTSYRVTLSAAPPSYFRGFTLIALKENREGDKEEDHAGTFQIIDEEETQFMSNCPVAVTESTPRRRTRIQVFWIAPPAGTGCVILKASIVQKRIIYFQDEGSLTKKLCEQDSTFDGVTDKPILDCCACGTAKYRLTFYGNWSEKTHPKDYPRRANHWSAIIGGSHSKNYVLWEYGGYASEGVKQVAELGSPVKMEEEIRQQSDEVLTVIKAKAQWPAWQPLNVRAAPSAEFSVDRTRHLMSFLTMMGPSPDWNVGLSAEDLCTKECGWVQKVVQDLIPWDAGTDSGVTYESPNKPTIPQEKIRPLTSLDHPQSPFYDPEGGSITQVARVVIERIARKGEQCNIVPDNVDDIVADLAPEEKDEDDTPETCIYSNWSPWSACSSSTCDKGKRMRQRMLKAQLDLSVPCPDTQDFQPCMGPGCSDEDGSTCTMSEWITWSPCSISCGTGTRSRERYVKQFPEDGSVCTLPTEETEKCTVNEECSPSSCLTTEWGEWDECSATCGMGMKKRHRMVKMSPADGSMCKAETSQAEKCMMPECHTIPCLLSLWSEWSDCSVTCGKGMRTRQRMLKSLAELGDCNEELEQVEKCMLPECPIDCELTEWSQWSECNKSCGKGHMIRTRMIQMEPQFGGTPCPETVQRKKCRIRKCLRNPSIQNLRWREARESRRSEQLREESDGDQFPGCRMRPWTAWSECTKLCGGGIQERYMTVKKRFKSSQFTSCKDKKEIRACNVHPC.

Positions 1–28 (MRLSPVLLRLSRGPALLALALPLAVALA) are cleaved as a signal peptide. The 166-residue stretch at 29-194 (FSDETLDKVP…DSTFDGVTDK (166 aa)) folds into the Reelin domain. 17 disulfide bridges follow: Cys-44-Cys-128, Cys-156-Cys-182, Cys-199-Cys-336, Cys-200-Cys-340, Cys-202-Cys-415, Cys-443-Cys-480, Cys-454-Cys-489, Cys-459-Cys-494, Cys-502-Cys-538, Cys-513-Cys-517, Cys-548-Cys-554, Cys-559-Cys-595, Cys-570-Cys-574, Cys-605-Cys-610, Cys-615-Cys-650, Cys-626-Cys-630, and Cys-660-Cys-665. Residues 195–388 (PILDCCACGT…LTSLDHPQSP (194 aa)) enclose the Spondin domain. N-linked (GlcNAc...) asparagine glycosylation is present at Asn-214. Positions 325, 354, and 358 each coordinate Ca(2+). TSP type-1 domains lie at 442–495 (TCIY…PGCS), 501–555 (TCTM…EECS), 558–611 (SCLT…PECH), 614–666 (PCLL…PECP), 668–721 (DCEL…RKCL), and 754–806 (GCRM…NVHP). Asn-681 carries N-linked (GlcNAc...) asparagine glycosylation.

In terms of assembly, binds to the central extracellular domain of APP and inhibits beta-secretase cleavage of APP.

Its subcellular location is the secreted. It localises to the extracellular space. The protein resides in the extracellular matrix. Its function is as follows. Cell adhesion protein that promotes the attachment of spinal cord and sensory neuron cells and the outgrowth of neurites in vitro. May contribute to the growth and guidance of axons in both the spinal cord and the PNS. Major factor for vascular smooth muscle cell. In Bos taurus (Bovine), this protein is Spondin-1 (SPON1).